Consider the following 129-residue polypeptide: Prefoldin subunit 4 (129 aa).

Met-1 carries the N-acetylmethionine modification.

This sequence belongs to the prefoldin subunit beta family. As to quaternary structure, heterohexamer of two PFD-alpha type and four PFD-beta type subunits.

In terms of biological role, binds specifically to cytosolic chaperonin (c-CPN) and transfers target proteins to it. Binds to nascent polypeptide chain and promotes folding in an environment in which there are many competing pathways for nonnative proteins. The polypeptide is Prefoldin subunit 4 (GIM3) (Saccharomyces cerevisiae (strain ATCC 204508 / S288c) (Baker's yeast)).